The sequence spans 146 residues: Acidic phospholipase A2 S5-32M (146 aa).

A signal peptide spans Met1–Ala19. A propeptide spanning residues Ala20–Leu27 is cleaved from the precursor. Intrachain disulfides connect Cys38–Cys98, Cys54–Cys145, Cys56–Cys72, Cys71–Cys126, Cys78–Cys119, Cys87–Cys112, and Cys105–Cys117. 3 residues coordinate Ca(2+): Tyr55, Gly57, and Gly59. His75 is a catalytic residue. Asp76 is a Ca(2+) binding site. Asp120 is an active-site residue.

This sequence belongs to the phospholipase A2 family. Group I subfamily. D49 sub-subfamily. It depends on Ca(2+) as a cofactor. In terms of tissue distribution, expressed by the venom gland.

It is found in the secreted. It carries out the reaction a 1,2-diacyl-sn-glycero-3-phosphocholine + H2O = a 1-acyl-sn-glycero-3-phosphocholine + a fatty acid + H(+). Functionally, snake venom phospholipase A2 (PLA2) that inhibits collagen-induced platelet aggregation. PLA2 catalyzes the calcium-dependent hydrolysis of the 2-acyl groups in 3-sn-phosphoglycerides. This is Acidic phospholipase A2 S5-32M from Austrelaps superbus (Lowland copperhead snake).